A 615-amino-acid polypeptide reads, in one-letter code: Mitochondrial distribution and morphology protein 34 (615 aa).

Residues 1–195 (MAFNFNWSPL…LPAIIHRLSL (195 aa)) form the SMP-LTD domain. Disordered stretches follow at residues 293 to 313 (SDKP…RTSS), 346 to 566 (ATTG…PQPD), and 596 to 615 (PAFW…YEPR). Polar residues predominate over residues 301 to 313 (TPASTPNLHRTSS). Low complexity predominate over residues 346 to 355 (ATTGLSLGSG). Basic residues predominate over residues 356–367 (RHSKAGRKKKMR). 3 stretches are compositionally biased toward polar residues: residues 384–403 (IGST…TRTP), 435–446 (DATTSARASESS), and 457–499 (VTAQ…YSSR). The segment covering 517–557 (QQQQFQQQQQQQQQQQQQQQQQQQQQQQQQQQQQQQQQQQQ) has biased composition (low complexity). Basic and acidic residues predominate over residues 596–606 (PAFWEDSHQHD).

This sequence belongs to the MDM34 family. Component of the ER-mitochondria encounter structure (ERMES) or MDM complex, composed of mmm-1, mdm10, mdm12 and mdm34.

The protein resides in the mitochondrion outer membrane. In terms of biological role, component of the ERMES/MDM complex, which serves as a molecular tether to connect the endoplasmic reticulum (ER) and mitochondria. Components of this complex are involved in the control of mitochondrial shape and protein biogenesis, and function in nonvesicular lipid trafficking between the ER and mitochondria. Mdm34 is required for the interaction of the ER-resident membrane protein mmm-1 and the outer mitochondrial membrane-resident beta-barrel protein mdm10. This Neurospora crassa (strain ATCC 24698 / 74-OR23-1A / CBS 708.71 / DSM 1257 / FGSC 987) protein is Mitochondrial distribution and morphology protein 34.